The following is a 206-amino-acid chain: Small ribosomal subunit protein uS4 (206 aa).

Residues 96-156 enclose the S4 RNA-binding domain; it reads TRLDNVVYRM…EKSRTQARIK (61 aa).

This sequence belongs to the universal ribosomal protein uS4 family. As to quaternary structure, part of the 30S ribosomal subunit. Contacts protein S5. The interaction surface between S4 and S5 is involved in control of translational fidelity.

One of the primary rRNA binding proteins, it binds directly to 16S rRNA where it nucleates assembly of the body of the 30S subunit. In terms of biological role, with S5 and S12 plays an important role in translational accuracy. In Shewanella halifaxensis (strain HAW-EB4), this protein is Small ribosomal subunit protein uS4.